The chain runs to 634 residues: DNA-directed RNA polymerase subunit gamma (634 aa).

The Zn(2+) site is built by C74, C76, C89, and C92. 3 residues coordinate Mg(2+): D471, D473, and D475.

Belongs to the RNA polymerase beta' chain family. RpoC1 subfamily. In terms of assembly, in cyanobacteria the RNAP catalytic core is composed of 2 alpha, 1 beta, 1 beta', 1 gamma and 1 omega subunit. When a sigma factor is associated with the core the holoenzyme is formed, which can initiate transcription. Mg(2+) is required as a cofactor. Requires Zn(2+) as cofactor.

It carries out the reaction RNA(n) + a ribonucleoside 5'-triphosphate = RNA(n+1) + diphosphate. Functionally, DNA-dependent RNA polymerase catalyzes the transcription of DNA into RNA using the four ribonucleoside triphosphates as substrates. This is DNA-directed RNA polymerase subunit gamma from Synechococcus sp. (strain RCC307).